The chain runs to 267 residues: Luciferase (267 aa).

An N-linked (GlcNAc...) asparagine glycan is attached at asparagine 4. Residues 17–39 (LSSRSIAITCGVVLASAIAFPII) traverse the membrane as a helical segment.

It belongs to the fungal luciferase family.

It localises to the membrane. The enzyme catalyses 3-hydroxyhispidin + O2 = (E)-caffeoylpyruvate + hnu + CO2. It catalyses the reaction 3-hydroxyhispidin + O2 = 4-[(E)-2-(3,4-dihydroxyphenyl)ethenyl]-1,7-dihydroxy-2,3,5-trioxabicyclo[2.2.2]oct-7-en-6-one. Its function is as follows. Luciferase; part of the gene cluster that mediates the fungal bioluminescence cycle. Uses the fungal luciferin 3-hydroxyhispidin as a substrate to produce an endoperoxide as a high-energy intermediate with decomposition that yields oxyluciferin (also known as caffeoylpyruvate) and light emission. The fungal bioluminescence cycle begins with the hispidin synthetase that catalyzes the formation of hispidin which is further hydroxylated by the hispidin-3-hydroxylase, yielding the fungal luciferin 3-hydroxyhispidin. The luciferase then produces an endoperoxide as a high-energy intermediate with decomposition that yields oxyluciferin and light emission. Oxyluciferin can be recycled to caffeic acid by caffeoylpyruvate hydrolase. The protein is Luciferase of Neonothopanus nambi (Agaricus nambi).